Here is a 217-residue protein sequence, read N- to C-terminus: MTLFEKLRCLFTFGQGVALPLPELSSNTTPDQIFEQWFADANKSGILLPEAMSVSSCNSDGQPSSRMVLLKDYDKEGFVFFTNYESRKSHELAENNKVALLFHWNVLQRQIRIEGTVEKVSIQESADYFHSRDRGSQVGAWASKQSQKLKYDDELKERMSHYQDKFSEGEVPHPEFWGGWRVKPHAIEFWQGRANRLHDRLCFEKDGETWLNHKLNP.

Residues 66 to 71 (RMVLLK), 81 to 82 (FT), Arg-87, Lys-88, and Gln-110 each bind FMN. Residue Lys-71 participates in substrate binding. Tyr-128, Arg-132, and Ser-136 together coordinate substrate. Residues 145–146 (QS) and Trp-190 each bind FMN. Residue 196 to 198 (RLH) participates in substrate binding. Arg-200 is an FMN binding site.

The protein belongs to the pyridoxamine 5'-phosphate oxidase family. In terms of assembly, homodimer. It depends on FMN as a cofactor.

It carries out the reaction pyridoxamine 5'-phosphate + O2 + H2O = pyridoxal 5'-phosphate + H2O2 + NH4(+). It catalyses the reaction pyridoxine 5'-phosphate + O2 = pyridoxal 5'-phosphate + H2O2. It participates in cofactor metabolism; pyridoxal 5'-phosphate salvage; pyridoxal 5'-phosphate from pyridoxamine 5'-phosphate: step 1/1. The protein operates within cofactor metabolism; pyridoxal 5'-phosphate salvage; pyridoxal 5'-phosphate from pyridoxine 5'-phosphate: step 1/1. Functionally, catalyzes the oxidation of either pyridoxine 5'-phosphate (PNP) or pyridoxamine 5'-phosphate (PMP) into pyridoxal 5'-phosphate (PLP). This chain is Pyridoxine/pyridoxamine 5'-phosphate oxidase, found in Colwellia psychrerythraea (strain 34H / ATCC BAA-681) (Vibrio psychroerythus).